The primary structure comprises 55 residues: Conotoxin Cal14.14 (55 aa).

An N-terminal signal peptide occupies residues 1–20 (MFRLGVFLLTFLLLVSMATS). 2 cysteine pairs are disulfide-bonded: Cys-34/Cys-48 and Cys-38/Cys-52.

As to expression, expressed by the venom duct.

Its subcellular location is the secreted. Its function is as follows. Probable neurotoxin. This is Conotoxin Cal14.14 from Californiconus californicus (California cone).